Reading from the N-terminus, the 305-residue chain is Tyrosine recombinase XerC (305 aa).

The Core-binding (CB) domain maps to 1–84; the sequence is MNEVFESYLT…TLRGFYKYAL (84 aa). The Tyr recombinase domain maps to 105–299; that stretch reads KLPVFMFPKQ…TAEQLQNLYK (195 aa). Catalysis depends on residues arginine 146, lysine 170, histidine 251, arginine 254, and histidine 277. Residue tyrosine 286 is the O-(3'-phospho-DNA)-tyrosine intermediate of the active site.

The protein belongs to the 'phage' integrase family. XerC subfamily. Forms a cyclic heterotetrameric complex composed of two molecules of XerC and two molecules of XerD.

It is found in the cytoplasm. Its function is as follows. Site-specific tyrosine recombinase, which acts by catalyzing the cutting and rejoining of the recombining DNA molecules. The XerC-XerD complex is essential to convert dimers of the bacterial chromosome into monomers to permit their segregation at cell division. It also contributes to the segregational stability of plasmids. The polypeptide is Tyrosine recombinase XerC (Treponema denticola (strain ATCC 35405 / DSM 14222 / CIP 103919 / JCM 8153 / KCTC 15104)).